The primary structure comprises 165 residues: Protein SprT (165 aa).

The region spanning 20-163 is the SprT-like domain; it reads EKLAQANLKL…RCVHCGEQLV (144 aa). Position 78 (His78) interacts with Zn(2+). Residue Glu79 is part of the active site. His82 is a Zn(2+) binding site.

Belongs to the SprT family. Zn(2+) is required as a cofactor.

The protein resides in the cytoplasm. The chain is Protein SprT from Escherichia coli O127:H6 (strain E2348/69 / EPEC).